The following is a 427-amino-acid chain: Enolase (427 aa).

Gln163 contributes to the (2R)-2-phosphoglycerate binding site. Glu205 (proton donor) is an active-site residue. Asp242, Glu285, and Asp312 together coordinate Mg(2+). Residues Lys337, Arg366, Ser367, and Lys388 each coordinate (2R)-2-phosphoglycerate. Lys337 acts as the Proton acceptor in catalysis.

It belongs to the enolase family. Mg(2+) is required as a cofactor.

Its subcellular location is the cytoplasm. It localises to the secreted. The protein localises to the cell surface. The catalysed reaction is (2R)-2-phosphoglycerate = phosphoenolpyruvate + H2O. The protein operates within carbohydrate degradation; glycolysis; pyruvate from D-glyceraldehyde 3-phosphate: step 4/5. Functionally, catalyzes the reversible conversion of 2-phosphoglycerate (2-PG) into phosphoenolpyruvate (PEP). It is essential for the degradation of carbohydrates via glycolysis. The chain is Enolase from Dechloromonas aromatica (strain RCB).